The primary structure comprises 352 residues: Glycoprotein integral membrane protein 1 (352 aa).

A signal peptide spans 1-25; sequence MASRCKIHLTVAYLLILCILASAQS. Residues 26-281 are Extracellular-facing; that stretch reads KQMTTETVVL…KLRRFLSDSV (256 aa). N-linked (GlcNAc...) asparagine glycosylation is found at Asn36, Asn44, Asn89, Asn109, Asn151, and Asn197. The segment at 206-245 is disordered; the sequence is NSETTQEEIAAPGKLPETPLRMDPETLYESREEEERRSDS. Basic and acidic residues predominate over residues 225-244; sequence LRMDPETLYESREEEERRSD. The helical transmembrane segment at 282 to 302 threads the bilayer; it reads PLFFLVMWVVVVGVAGSAVVI. The Cytoplasmic segment spans residues 303 to 352; it reads KILDLIFPSCEHRGFFHLNPETLMPDDEKVSLIDNMEGDMTEKSILLIEK.

Its subcellular location is the membrane. This is Glycoprotein integral membrane protein 1 (ginm1) from Danio rerio (Zebrafish).